The sequence spans 207 residues: Urease accessory protein UreG (207 aa).

12–19 is a GTP binding site; that stretch reads GPVGAGKT.

This sequence belongs to the SIMIBI class G3E GTPase family. UreG subfamily. In terms of assembly, homodimer. UreD, UreF and UreG form a complex that acts as a GTP-hydrolysis-dependent molecular chaperone, activating the urease apoprotein by helping to assemble the nickel containing metallocenter of UreC. The UreE protein probably delivers the nickel.

It is found in the cytoplasm. Its function is as follows. Facilitates the functional incorporation of the urease nickel metallocenter. This process requires GTP hydrolysis, probably effectuated by UreG. In Cereibacter sphaeroides (strain ATCC 17023 / DSM 158 / JCM 6121 / CCUG 31486 / LMG 2827 / NBRC 12203 / NCIMB 8253 / ATH 2.4.1.) (Rhodobacter sphaeroides), this protein is Urease accessory protein UreG.